The sequence spans 307 residues: Lipoyl synthase (307 aa).

[4Fe-4S] cluster-binding residues include Cys55, Cys60, Cys66, Cys81, Cys85, Cys88, and Ser292. Positions 67 to 281 (WEDREATFLI…ARHAEELGFS (215 aa)) constitute a Radical SAM core domain.

This sequence belongs to the radical SAM superfamily. Lipoyl synthase family. [4Fe-4S] cluster serves as cofactor.

It is found in the cytoplasm. It catalyses the reaction [[Fe-S] cluster scaffold protein carrying a second [4Fe-4S](2+) cluster] + N(6)-octanoyl-L-lysyl-[protein] + 2 oxidized [2Fe-2S]-[ferredoxin] + 2 S-adenosyl-L-methionine + 4 H(+) = [[Fe-S] cluster scaffold protein] + N(6)-[(R)-dihydrolipoyl]-L-lysyl-[protein] + 4 Fe(3+) + 2 hydrogen sulfide + 2 5'-deoxyadenosine + 2 L-methionine + 2 reduced [2Fe-2S]-[ferredoxin]. The protein operates within protein modification; protein lipoylation via endogenous pathway; protein N(6)-(lipoyl)lysine from octanoyl-[acyl-carrier-protein]: step 2/2. Functionally, catalyzes the radical-mediated insertion of two sulfur atoms into the C-6 and C-8 positions of the octanoyl moiety bound to the lipoyl domains of lipoate-dependent enzymes, thereby converting the octanoylated domains into lipoylated derivatives. This is Lipoyl synthase from Mycobacterium avium (strain 104).